We begin with the raw amino-acid sequence, 1336 residues long: Probable ATP-dependent DNA helicase HFM1 (1336 aa).

One can recognise a Helicase ATP-binding domain in the interval 159–347; sequence EHLLYSDRNF…WLSDENSPGV (189 aa). An ATP-binding site is contributed by 172 to 179; that stretch reads APTGSGKT. The DEAH box signature appears at 280-283; the sequence is DEVH. In terms of domain architecture, Helicase C-terminal spans 388 to 589; it reads NIIQTYSDGR…DVKVALEWIR (202 aa). In terms of domain architecture, SEC63 spans 646–961; the sequence is PTETGKLMAL…GLDIQQSFNI (316 aa). A C4-type zinc finger spans residues 1016 to 1031; sequence CNHNCKNKDACGHECC.

The protein belongs to the helicase family. SKI2 subfamily. It depends on Zn(2+) as a cofactor.

The catalysed reaction is Couples ATP hydrolysis with the unwinding of duplex DNA by translocating in the 3'-5' direction.. The enzyme catalyses ATP + H2O = ADP + phosphate + H(+). Its function is as follows. Required for crossover formation and complete synapsis of homologous chromosomes during meiosis. The sequence is that of Probable ATP-dependent DNA helicase HFM1 (hfm1) from Xenopus tropicalis (Western clawed frog).